The sequence spans 233 residues: 2,3,4,5-tetrahydropyridine-2,6-dicarboxylate N-acetyltransferase (233 aa).

The protein belongs to the transferase hexapeptide repeat family. DapH subfamily.

It catalyses the reaction (S)-2,3,4,5-tetrahydrodipicolinate + acetyl-CoA + H2O = L-2-acetamido-6-oxoheptanedioate + CoA. It participates in amino-acid biosynthesis; L-lysine biosynthesis via DAP pathway; LL-2,6-diaminopimelate from (S)-tetrahydrodipicolinate (acetylase route): step 1/3. In terms of biological role, catalyzes the transfer of an acetyl group from acetyl-CoA to tetrahydrodipicolinate. The sequence is that of 2,3,4,5-tetrahydropyridine-2,6-dicarboxylate N-acetyltransferase from Enterococcus faecalis (strain ATCC 700802 / V583).